A 525-amino-acid chain; its full sequence is Bestrophin homolog 15 (525 aa).

Transmembrane regions (helical) follow at residues 36–56 (LFMF…NLII), 71–91 (FDQN…VTII), 237–257 (LAYP…ALIA), and 273–293 (ILYP…VVGW).

This sequence belongs to the anion channel-forming bestrophin (TC 1.A.46) family. Calcium-sensitive chloride channel subfamily. In terms of assembly, forms oligomers.

It localises to the cell membrane. In terms of biological role, forms chloride channels. This is Bestrophin homolog 15 (best-15) from Caenorhabditis elegans.